Consider the following 461-residue polypeptide: Bifunctional protein GlmU (461 aa).

The pyrophosphorylase stretch occupies residues 1 to 234; that stretch reads MSLSVVILAA…EIEVEGANNR (234 aa). UDP-N-acetyl-alpha-D-glucosamine is bound by residues 8–11, lysine 22, glutamine 77, 82–83, 104–106, glycine 141, glutamate 159, asparagine 174, and asparagine 232; these read LAAG, GT, and YGD. Mg(2+) is bound at residue aspartate 106. Asparagine 232 is a binding site for Mg(2+). The linker stretch occupies residues 235-255; sequence VQLATLERAYQARIAEELMIA. Residues 256-461 are N-acetyltransferase; the sequence is GASLRDPARI…AGWQRPVKKS (206 aa). 2 residues coordinate UDP-N-acetyl-alpha-D-glucosamine: arginine 338 and lysine 356. Histidine 368 functions as the Proton acceptor in the catalytic mechanism. UDP-N-acetyl-alpha-D-glucosamine contacts are provided by tyrosine 371 and asparagine 382. Residues alanine 385, 391 to 392, serine 410, alanine 428, and arginine 445 contribute to the acetyl-CoA site; that span reads NY.

This sequence in the N-terminal section; belongs to the N-acetylglucosamine-1-phosphate uridyltransferase family. The protein in the C-terminal section; belongs to the transferase hexapeptide repeat family. Homotrimer. Requires Mg(2+) as cofactor.

Its subcellular location is the cytoplasm. It carries out the reaction alpha-D-glucosamine 1-phosphate + acetyl-CoA = N-acetyl-alpha-D-glucosamine 1-phosphate + CoA + H(+). It catalyses the reaction N-acetyl-alpha-D-glucosamine 1-phosphate + UTP + H(+) = UDP-N-acetyl-alpha-D-glucosamine + diphosphate. It functions in the pathway nucleotide-sugar biosynthesis; UDP-N-acetyl-alpha-D-glucosamine biosynthesis; N-acetyl-alpha-D-glucosamine 1-phosphate from alpha-D-glucosamine 6-phosphate (route II): step 2/2. Its pathway is nucleotide-sugar biosynthesis; UDP-N-acetyl-alpha-D-glucosamine biosynthesis; UDP-N-acetyl-alpha-D-glucosamine from N-acetyl-alpha-D-glucosamine 1-phosphate: step 1/1. It participates in bacterial outer membrane biogenesis; LPS lipid A biosynthesis. Functionally, catalyzes the last two sequential reactions in the de novo biosynthetic pathway for UDP-N-acetylglucosamine (UDP-GlcNAc). The C-terminal domain catalyzes the transfer of acetyl group from acetyl coenzyme A to glucosamine-1-phosphate (GlcN-1-P) to produce N-acetylglucosamine-1-phosphate (GlcNAc-1-P), which is converted into UDP-GlcNAc by the transfer of uridine 5-monophosphate (from uridine 5-triphosphate), a reaction catalyzed by the N-terminal domain. The protein is Bifunctional protein GlmU of Colwellia psychrerythraea (strain 34H / ATCC BAA-681) (Vibrio psychroerythus).